The primary structure comprises 451 residues: Serine/threonine-protein phosphatase 2A 55 kDa regulatory subunit B delta isoform (451 aa).

WD repeat units follow at residues 30-69 (AEAD…KSRP), 95-136 (EIEE…KRAE), 179-217 (AHTY…RSFN), 228-268 (ELTE…LCDR), 287-325 (EIIS…RPVE), 342-383 (ENDC…DITL), and 418-451 (DFNK…DKIN).

It belongs to the phosphatase 2A regulatory subunit B family. As to quaternary structure, PP2A consists of a common heterodimeric core enzyme, composed of a 36 kDa catalytic subunit (subunit C) and a 65 kDa constant regulatory subunit (PR65 or subunit A), that associates with a variety of regulatory subunits.

The protein localises to the cytoplasm. In terms of biological role, substrate-recognition subunit of protein phosphatase 2A (PP2A) that plays a key role in cell cycle by controlling mitosis entry and exit. The activity of PP2A complexes containing PPP2R2D (PR55-delta) fluctuate during the cell cycle: the activity is high in interphase and low in mitosis. This is Serine/threonine-protein phosphatase 2A 55 kDa regulatory subunit B delta isoform (PPP2R2D) from Gallus gallus (Chicken).